We begin with the raw amino-acid sequence, 143 residues long: Large ribosomal subunit protein uL11 (143 aa).

The protein belongs to the universal ribosomal protein uL11 family. As to quaternary structure, part of the ribosomal stalk of the 50S ribosomal subunit. Interacts with L10 and the large rRNA to form the base of the stalk. L10 forms an elongated spine to which L12 dimers bind in a sequential fashion forming a multimeric L10(L12)X complex. One or more lysine residues are methylated.

In terms of biological role, forms part of the ribosomal stalk which helps the ribosome interact with GTP-bound translation factors. This is Large ribosomal subunit protein uL11 from Bifidobacterium adolescentis (strain ATCC 15703 / DSM 20083 / NCTC 11814 / E194a).